Reading from the N-terminus, the 89-residue chain is Small ribosomal subunit protein uS17 (89 aa).

It belongs to the universal ribosomal protein uS17 family. In terms of assembly, part of the 30S ribosomal subunit.

Functionally, one of the primary rRNA binding proteins, it binds specifically to the 5'-end of 16S ribosomal RNA. The sequence is that of Small ribosomal subunit protein uS17 from Coxiella burnetii (strain Dugway 5J108-111).